Consider the following 425-residue polypeptide: UDP-N-acetylglucosamine 1-carboxyvinyltransferase (425 aa).

22-23 (KN) is a phosphoenolpyruvate binding site. UDP-N-acetyl-alpha-D-glucosamine is bound at residue arginine 98. Residue cysteine 122 is the Proton donor of the active site. Cysteine 122 carries the 2-(S-cysteinyl)pyruvic acid O-phosphothioketal modification. UDP-N-acetyl-alpha-D-glucosamine-binding positions include 127–131 (RPVDQ), aspartate 313, and isoleucine 335.

The protein belongs to the EPSP synthase family. MurA subfamily.

Its subcellular location is the cytoplasm. It carries out the reaction phosphoenolpyruvate + UDP-N-acetyl-alpha-D-glucosamine = UDP-N-acetyl-3-O-(1-carboxyvinyl)-alpha-D-glucosamine + phosphate. It functions in the pathway cell wall biogenesis; peptidoglycan biosynthesis. Functionally, cell wall formation. Adds enolpyruvyl to UDP-N-acetylglucosamine. This Xylella fastidiosa (strain M12) protein is UDP-N-acetylglucosamine 1-carboxyvinyltransferase.